Reading from the N-terminus, the 249-residue chain is Adenylate kinase (249 aa).

43 to 48 (GAGKGT) serves as a coordination point for ATP. The NMP stretch occupies residues 63–92 (ATGDMLRAQVAAKTALGVEAKKIMDQGGLV). Residues T64, R69, 90 to 92 (GLV), 119 to 122 (GFPR), and Q126 contribute to the AMP site. Positions 160-197 (GRLVHPASGRSYHKLFNPPKKNMIDDITGEPLVQRSDD) are LID. ATP is bound by residues R161 and 170–171 (SY). AMP-binding residues include R194 and R205. ATP is bound at residue Q233.

The protein belongs to the adenylate kinase family. AK2 subfamily. As to quaternary structure, monomer.

The protein resides in the cytoplasm. It localises to the cytosol. It is found in the mitochondrion intermembrane space. The catalysed reaction is AMP + ATP = 2 ADP. Catalyzes the reversible transfer of the terminal phosphate group between ATP and AMP. Plays an important role in cellular energy homeostasis and in adenine nucleotide metabolism. Adenylate kinase activity is critical for regulation of the phosphate utilization and the AMP de novo biosynthesis pathways. The sequence is that of Adenylate kinase from Scheffersomyces stipitis (strain ATCC 58785 / CBS 6054 / NBRC 10063 / NRRL Y-11545) (Yeast).